The chain runs to 301 residues: MPIRIADNLPARRTLEAEGVIVMSETEAARQDIRPMRIALLNLMPDKITTETQIARLLGATPLQVDLELVRISDHVSKNTSAGHISAFYRPWDDVRAEKYDGLIVTGAPVETIPYEEVSYWDELRRIFDWSQSNVHRTLSVCWGAMAALYHFHGIEKHGLPTKASGVFRHVNHAPASPWMRGLPDVFDVPVSRWSEVRREDLPEGRGLSVLADSAETGLCLIDDPAMRTLHMFNHLEYDTLTLAGEYARDEGKYLPRNYFPGDDPQAMPANTWRGHGHLLYGNWINETYQTTPYDLADIGR.

Catalysis depends on Cys142, which acts as the Acyl-thioester intermediate. Positions 163 and 192 each coordinate substrate. The active-site Proton acceptor is His235. Residue Glu237 is part of the active site. Arg249 is a binding site for substrate.

The protein belongs to the MetA family.

Its subcellular location is the cytoplasm. The enzyme catalyses L-homoserine + acetyl-CoA = O-acetyl-L-homoserine + CoA. The protein operates within amino-acid biosynthesis; L-methionine biosynthesis via de novo pathway; O-acetyl-L-homoserine from L-homoserine: step 1/1. Transfers an acetyl group from acetyl-CoA to L-homoserine, forming acetyl-L-homoserine. In Novosphingobium aromaticivorans (strain ATCC 700278 / DSM 12444 / CCUG 56034 / CIP 105152 / NBRC 16084 / F199), this protein is Homoserine O-acetyltransferase.